The sequence spans 292 residues: Elongation factor Ts (292 aa).

The tract at residues 81–84 is involved in Mg(2+) ion dislocation from EF-Tu; sequence TDFV.

Belongs to the EF-Ts family.

It is found in the cytoplasm. Functionally, associates with the EF-Tu.GDP complex and induces the exchange of GDP to GTP. It remains bound to the aminoacyl-tRNA.EF-Tu.GTP complex up to the GTP hydrolysis stage on the ribosome. This Psychromonas ingrahamii (strain DSM 17664 / CCUG 51855 / 37) protein is Elongation factor Ts.